The chain runs to 118 residues: Large ribosomal subunit protein bL21c (118 aa).

This sequence belongs to the bacterial ribosomal protein bL21 family. Part of the 50S ribosomal subunit.

Its subcellular location is the plastid. It is found in the chloroplast. Its function is as follows. This protein binds to 23S rRNA. This chain is Large ribosomal subunit protein bL21c, found in Psilotum nudum (Whisk fern).